The chain runs to 441 residues: Platelet-activating factor acetylhydrolase (441 aa).

Residues 1-21 (MVPPKLHVLFCLCGCLAVVYP) form the signal peptide. The active-site Nucleophile is the Ser-273. Catalysis depends on charge relay system residues Asp-296 and His-351. Residues Asn-423 and Asn-433 are each glycosylated (N-linked (GlcNAc...) asparagine).

The protein belongs to the AB hydrolase superfamily. Lipase family. In terms of processing, N-glycosylated. Macrophage-derived PLA2G7 carries sialylated complex-type N-glycans that hinder its binding to HDL particles. As to expression, plasma. Secreted by macrophages (at protein level).

It localises to the secreted. Its subcellular location is the extracellular space. The enzyme catalyses a 1-O-alkyl-2-acetyl-sn-glycero-3-phosphocholine + H2O = a 1-O-alkyl-sn-glycero-3-phosphocholine + acetate + H(+). The catalysed reaction is 1-O-decyl-2-acetyl-sn-glycero-3-phosphocholine + H2O = 1-O-decyl-sn-glycero-3-phosphocholine + acetate + H(+). It carries out the reaction 1-O-dodecyl-2-acetyl-sn-glycero-3-phosphocholine + H2O = 1-O-dodecyl-sn-glycero-3-phosphocholine + acetate + H(+). It catalyses the reaction 1-O-tetradecyl-2-acetyl-sn-glycero-3-phosphocholine + H2O = 1-O-tetradecyl-sn-glycero-3-phosphocholine + acetate + H(+). The enzyme catalyses 1-O-hexadecyl-2-acetyl-sn-glycero-3-phosphocholine + H2O = 1-O-hexadecyl-sn-glycero-3-phosphocholine + acetate + H(+). The catalysed reaction is 1-O-octadecyl-2-acetyl-sn-glycero-3-phosphocholine + H2O = 1-O-octadecyl-sn-glycero-3-phosphocholine + acetate + H(+). It carries out the reaction 1-hexadecanoyl-2-acetyl-sn-glycero-3-phosphocholine + H2O = 1-hexadecanoyl-sn-glycero-3-phosphocholine + acetate + H(+). It catalyses the reaction 1-hexadecanoyl-2-propionyl-sn-glycero-3-phosphocholine + H2O = propanoate + 1-hexadecanoyl-sn-glycero-3-phosphocholine + H(+). The enzyme catalyses 1-hexadecanoyl-2-butanoyl-sn-glycero-3-phosphocholine + H2O = butanoate + 1-hexadecanoyl-sn-glycero-3-phosphocholine + H(+). The catalysed reaction is 1-hexadecanoyl-2-pentanoyl-sn-glycero-3-phosphocholine + H2O = pentanoate + 1-hexadecanoyl-sn-glycero-3-phosphocholine + H(+). It carries out the reaction 1-hexadecanoyl-2-glutaroyl-sn-glycero-3-phosphocholine + H2O = glutarate + 1-hexadecanoyl-sn-glycero-3-phosphocholine + H(+). It catalyses the reaction 1-hexadecanoyl-2-(5-oxopentanoyl)-sn-glycero-3-phosphocholine + H2O = 5-oxopentanoate + 1-hexadecanoyl-sn-glycero-3-phosphocholine + H(+). The enzyme catalyses 1-hexadecanoyl-2-(9-oxononanoyl)-sn-glycero-3-phosphocholine + H2O = 9-oxononanoate + 1-hexadecanoyl-sn-glycero-3-phosphocholine + H(+). The catalysed reaction is 1-hexadecanoyl-2-[9-hydroperoxy-(10E-octadecenoyl)]-sn-glycero-3-phosphocholine + H2O = 9-hydroperoxy-10E-octadecenoate + 1-hexadecanoyl-sn-glycero-3-phosphocholine + H(+). It carries out the reaction 1-hexadecanoyl-2-(10-hydroperoxy-8E-octadecenoyl)-sn-glycero-3-phosphocholine + H2O = 10-hydroperoxy-(8E)-octadecenoate + 1-hexadecanoyl-sn-glycero-3-phosphocholine + H(+). Its function is as follows. Lipoprotein-associated calcium-independent phospholipase A2 involved in phospholipid catabolism during inflammatory and oxidative stress response. At the lipid-aqueous interface, hydrolyzes the ester bond of fatty acyl group attached at sn-2 position of phospholipids (phospholipase A2 activity). Specifically targets phospholipids with a short-chain fatty acyl group at sn-2 position. Can hydrolyze phospholipids with long fatty acyl chains, only if they carry oxidized functional groups. Hydrolyzes and inactivates platelet-activating factor (PAF, 1-O-alkyl-2-acetyl-sn-glycero-3-phosphocholine), a potent pro-inflammatory signaling lipid that acts through PTAFR on various innate immune cells. Hydrolyzes oxidatively truncated phospholipids carrying an aldehyde group at omega position, preventing their accumulation in low-density lipoprotein (LDL) particles and uncontrolled pro-inflammatory effects. As part of high-density lipoprotein (HDL) particles, can hydrolyze phospholipids having long-chain fatty acyl hydroperoxides at sn-2 position and protect against potential accumulation of these oxylipins in the vascular wall. Catalyzes the release from membrane phospholipids of F2-isoprostanes, lipid biomarkers of cellular oxidative damage. The protein is Platelet-activating factor acetylhydrolase (PLA2G7) of Homo sapiens (Human).